Consider the following 4383-residue polypeptide: Replicase polyprotein 1a (4383 aa).

One can recognise a CoV Nsp1 globular domain in the interval 54-196 (PENHVMVDCR…PWVMYLRKRG (143 aa)). Positions 216 to 246 (FKVEDAYDQVHDEPKGKFSKKAYALIRGYRG) constitute a BetaCoV Nsp1 C-terminal domain. Positions 250–514 (LLYVDQYGCD…VKETNLICKA (265 aa)) constitute a CoV Nsp2 N-terminal domain. Zn(2+) is bound by residues Cys392, Cys397, Cys413, and Cys416. The segment at 392 to 416 (CEQDSCDFKGWIPGNMIDGFACTTC) is C4. The region spanning 524–713 (CGNLHQRELL…AQAFQSVAKV (190 aa)) is the CoV Nsp2 middle domain. In terms of domain architecture, CoV Nsp2 C-terminal spans 733–851 (RRRICLSGRK…LDQAWRVPCA (119 aa)). Residues 853–966 (RRVTFKEQPT…LYCAFTAPED (114 aa)) enclose the Ubiquitin-like 1 domain. The disordered stretch occupies residues 995–1025 (PCVASEQEESSEVLEDTLDDGPSVETSDSQV). The span at 1000-1013 (EQEESSEVLEDTLD) shows a compositional bias: acidic residues. The Peptidase C16 1 domain occupies 1036–1274 (DLESVIQDYE…IAQLYGSCIT (239 aa)). Catalysis depends on Cys1074, which acts as the For PL1-PRO activity. Zn(2+) is bound by residues Cys1151, Cys1154, Cys1177, and Cys1179. Residues 1151–1179 (CIKCDLALKLKGLDAMFFYGDVVSHICKC) form a C4-type 1 zinc finger. Catalysis depends on for PL1-PRO activity residues His1225 and Asp1236. The 161-residue stretch at 1275-1435 (PNVCFVKGDI…LISKCQITAV (161 aa)) folds into the Macro domain. Residues 1491–1563 (DDARTFVQSN…VAQIKALFLD (73 aa)) enclose the DPUP domain. The 56-residue stretch at 1562 to 1617 (LDKVDILLTVDGVNFTNRFVPVGESFGKSLGNVFCDGVNVTKHKCDINYKGKVFFQ) folds into the Ubiquitin-like 2 domain. The Peptidase C16 2 domain maps to 1631-1892 (SSFNFDQKEL…KIEYKPDLSQ (262 aa)). Catalysis depends on Cys1671, which acts as the For PL2-PRO activity. Cys1749, Cys1751, Cys1783, and Cys1785 together coordinate Zn(2+). The C4-type 2 zinc finger occupies 1749-1785 (CKCGVKQEQRTGLDAVMHFGTLSREDLEIGYTVDCSC). Catalysis depends on for PL2-PRO activity residues His1828 and Asp1842. The Nucleic acid-binding domain maps to 1906 to 2007 (IKAQFKTFEK…TYFNRPLLVD (102 aa)). A G2M domain is found at 2020–2169 (DDSGDSSESG…ADNKVIYTTE (150 aa)). 3 helical membrane passes run 2138–2158 (TSAC…WIKI), 2199–2219 (ACII…NVIF), and 2221–2241 (DFYL…AQWI). An HD1 region spans residues 2138-2385 (TSACFNFIKW…ASFIKLFSLF (248 aa)). Positions 2235-2296 (GKIAQWIKNT…AIDVVQYEAD (62 aa)) constitute a 3Ecto domain. Disulfide bonds link Cys2251/Cys2275 and Cys2266/Cys2272. Helical transmembrane passes span 2313–2333 (LIVS…LISI), 2343–2363 (LFML…ANML), and 2365–2385 (AHVF…FSLF). A Y1 region spans residues 2383–2473 (SLFKHVAYGC…ELKRPIQPTD (91 aa)). Residues 2383–2750 (SLFKHVAYGC…LTTPFSLKGG (368 aa)) form the CoV Nsp3 Y domain. Zn(2+) contacts are provided by His2387, Cys2392, Cys2397, Cys2400, Cys2433, His2436, Cys2440, and Cys2443. Positions 2387–2400 (HVAYGCSKSGCLFC) are ZF1. Residues 2433–2443 (CSKHQWNCIDC) form a ZF2 region. Residues 2474 to 2566 (VAYHTVTDVK…MVDKNLITTA (93 aa)) are Y2. The coV-Y stretch occupies residues 2474-2750 (VAYHTVTDVK…LTTPFSLKGG (277 aa)). The segment at 2567–2649 (NTGTSVTETM…DSVMSAVSAG (83 aa)) is Y3. The tract at residues 2650–2750 (LELTDESCNN…LTTPFSLKGG (101 aa)) is Y4. The next 7 helical transmembrane spans lie at 2752–2772 (VFSY…IGLW), 2824–2844 (STFG…VAVI), 3009–3029 (VFDL…FLAL), 3031–3051 (ASSI…YYLI), 3063–3083 (VVFV…VFQV), 3090–3110 (VYAI…SVIM), and 3115–3135 (LVMY…AVVV). Residues 2752 to 3135 (VFSYFVYVCF…FCLLYIAVVV (384 aa)) form an HD2 region. The 98-residue stretch at 3149–3246 (LGTSVRSDGT…TASVSTSFLQ (98 aa)) folds into the Nsp4C domain. One can recognise a Peptidase C30 domain in the interval 3247–3549 (SGIVKMVNPT…YQQLAGIKLQ (303 aa)). Residues His3287 and Cys3391 each act as for 3CL-PRO activity in the active site. The HD3 stretch occupies residues 3319 to 3775 (LSLTVMSYQM…IISCYWGLFS (457 aa)). Transmembrane regions (helical) follow at residues 3558-3578 (GTVC…TAFV), 3588-3608 (TNMF…MLLV), 3615-3635 (LTMY…LVVY), 3657-3677 (TYTD…FVTL), 3684-3704 (LFSF…WYKG), 3711-3731 (ILLM…LSMA), and 3755-3775 (IVLL…GLFS). In terms of domain architecture, RdRp Nsp7 cofactor spans 3837 to 3925 (SKLTDVKCAN…DYAKDNTVLQ (89 aa)). The RdRp Nsp8 cofactor domain maps to 3926 to 4122 (ALQSEFVNMA…YNEVSATVLQ (197 aa)). The Nsp9 ssRNA-binding domain maps to 4123–4232 (NNELMPAKLK…GTISSTVRLQ (110 aa)). In terms of domain architecture, ExoN/MTase coactivator spans 4233–4370 (AGTATEYASN…CVSTDTTVQS (138 aa)). Residues Cys4306, Cys4309, His4315, Cys4322, Cys4348, Cys4351, Cys4359, and Cys4361 each contribute to the Zn(2+) site. 2 zinc fingers span residues 4306–4322 (CIYC…DGLC) and 4348–4361 (CRVC…SCSC).

It belongs to the coronaviruses polyprotein 1ab family. As to quaternary structure, 3CL-PRO exists as monomer and homodimer. Eight copies of nsp7 and eight copies of nsp8 assemble to form a heterohexadecamer. Nsp9 is a dimer. Nsp10 forms a dodecamer. Specific enzymatic cleavages in vivo by its own proteases yield mature proteins. 3CL-PRO and PL-PRO proteinases are autocatalytically processed.

The protein localises to the host membrane. Its subcellular location is the host cytoplasm. The protein resides in the host perinuclear region. It catalyses the reaction Thiol-dependent hydrolysis of ester, thioester, amide, peptide and isopeptide bonds formed by the C-terminal Gly of ubiquitin (a 76-residue protein attached to proteins as an intracellular targeting signal).. The catalysed reaction is TSAVLQ-|-SGFRK-NH2 and SGVTFQ-|-GKFKK the two peptides corresponding to the two self-cleavage sites of the SARS 3C-like proteinase are the two most reactive peptide substrates. The enzyme exhibits a strong preference for substrates containing Gln at P1 position and Leu at P2 position.. The enzyme catalyses a 5'-end diphospho-ribonucleoside in mRNA + GTP + H(+) = a 5'-end (5'-triphosphoguanosine)-ribonucleoside in mRNA + diphosphate. Its function is as follows. The papain-like proteinase 1 (PL1-PRO) and papain-like proteinase 2 (PL2-PRO) are responsible for the cleavages located at the N-terminus of the replicase polyprotein. In addition, PLP2 possesses a deubiquitinating/deISGylating activity and processes both 'Lys-48'- and 'Lys-63'-linked polyubiquitin chains from cellular substrates. Antagonizes innate immune induction of type I interferon by blocking the phosphorylation, dimerization and subsequent nuclear translocation of host IRF-3. In terms of biological role, responsible for the majority of cleavages as it cleaves the C-terminus of replicase polyprotein at 11 sites. Recognizes substrates containing the core sequence [ILMVF]-Q-|-[SGACN]. Inhibited by the substrate-analog Cbz-Val-Asn-Ser-Thr-Leu-Gln-CMK. Also contains an ADP-ribose-1''-phosphate (ADRP)-binding function. Functionally, nsp7-nsp8 hexadecamer may possibly confer processivity to the polymerase, maybe by binding to dsRNA or by producing primers utilized by the latter. Catalytic subunit of viral RNA capping enzyme which catalyzes the RNA guanylyltransferase reaction for genomic and sub-genomic RNAs. The kinase-like NiRAN domain of NSP12 transfers RNA to the amino terminus of NSP9, forming a covalent RNA-protein intermediate. Subsequently, the NiRAN domain transfers RNA to GDP, forming the core cap structure GpppA-RNA. The NSP14 and NSP16 methyltransferases then add methyl groups to form functional cap structures. Its function is as follows. Binds to the 40S ribosomal subunit and inhibits host translation. The nsp1-40S ribosome complex further induces an endonucleolytic cleavage near the 5'UTR of host mRNAs, targeting them for degradation. This inhibits the integrated stress response (ISR) in the infected cell by preventing EIF2S1/eIF2-alpha phosphorylation upstream of stress granule formation and depletes host G3BP1. By suppressing host gene expression, nsp1 facilitates efficient viral gene expression in infected cells and evasion from host immune response. The sequence is that of Replicase polyprotein 1a from Human coronavirus OC43 (HCoV-OC43).